The sequence spans 118 residues: V-type proton ATPase subunit G 1 (118 aa).

An N-acetylalanine modification is found at alanine 2.

The protein belongs to the V-ATPase G subunit family. As to quaternary structure, V-ATPase is a heteromultimeric enzyme made up of two complexes: the ATP-hydrolytic V1 complex and the proton translocation V0 complex. The V1 complex consists of three catalytic AB heterodimers that form a heterohexamer, three peripheral stalks each consisting of EG heterodimers, one central rotor including subunits D and F, and the regulatory subunits C and H. The proton translocation complex V0 consists of the proton transport subunit a, a ring of proteolipid subunits c9c'', rotary subunit d, subunits e and f, and the accessory subunits ATP6AP1/Ac45 and ATP6AP2/PRR. Kidney; localizes to early distal nephron, encompassing thick ascending limbs and distal convoluted tubules (at protein level). Ubiquitous.

The protein localises to the apical cell membrane. Its function is as follows. Subunit of the V1 complex of vacuolar(H+)-ATPase (V-ATPase), a multisubunit enzyme composed of a peripheral complex (V1) that hydrolyzes ATP and a membrane integral complex (V0) that translocates protons. V-ATPase is responsible for acidifying and maintaining the pH of intracellular compartments and in some cell types, is targeted to the plasma membrane, where it is responsible for acidifying the extracellular environment. In aerobic conditions, involved in intracellular iron homeostasis, thus triggering the activity of Fe(2+) prolyl hydroxylase (PHD) enzymes, and leading to HIF1A hydroxylation and subsequent proteasomal degradation. In Mus musculus (Mouse), this protein is V-type proton ATPase subunit G 1 (Atp6v1g1).